The chain runs to 139 residues: ATP synthase epsilon chain (139 aa).

It belongs to the ATPase epsilon chain family. As to quaternary structure, F-type ATPases have 2 components, CF(1) - the catalytic core - and CF(0) - the membrane proton channel. CF(1) has five subunits: alpha(3), beta(3), gamma(1), delta(1), epsilon(1). CF(0) has three main subunits: a, b and c.

It localises to the cell inner membrane. Functionally, produces ATP from ADP in the presence of a proton gradient across the membrane. This chain is ATP synthase epsilon chain, found in Alcanivorax borkumensis (strain ATCC 700651 / DSM 11573 / NCIMB 13689 / SK2).